The following is a 491-amino-acid chain: Serine/threonine-protein kinase 33 (491 aa).

Positions 51–89 (FASQERKKERNTSRESSLKDLSIRTSNVERKPQAQWSRS) are disordered. Residues 54–82 (QERKKERNTSRESSLKDLSIRTSNVERKP) are compositionally biased toward basic and acidic residues. A Protein kinase domain is found at 111-377 (YTFGRILGQG…AKELLDNQWL (267 aa)). Residues 117 to 125 (LGQGSFGMV) and Lys140 contribute to the ATP site. Asp233 functions as the Proton acceptor in the catalytic mechanism. A disordered region spans residues 398 to 491 (KNNPESDEET…TTLFRGKKRL (94 aa)). Residues 402–414 (ESDEETNTDEETE) are compositionally biased toward acidic residues. Ser403 carries the post-translational modification Phosphoserine. A compositionally biased stretch (polar residues) spans 415–431 (QSAVYSPSANTAKQPTN). The span at 445-457 (SSNSSSSKLLSAE) shows a compositional bias: low complexity. Residues 475–484 (AKTTLKSTTL) are compositionally biased toward polar residues.

Belongs to the protein kinase superfamily. CAMK Ser/Thr protein kinase family. CaMK subfamily. As to quaternary structure, homodimer. In terms of processing, autophosphorylated. In terms of tissue distribution, highly expressed in testis, particularly in cells from the spermatogenic epithelia. Present in meiotic and post meiotic sperm cells. Significant expression is detected in lung epithelia, alveolar macrophages, horizontal cells in the retina and in embryonic organs such as heart, brain and spinal cord. Also expressed in pituitary gland, kidney, pancreas, trachea and thyroid gland.

The protein resides in the cytoplasm. It is found in the cytoskeleton. The protein localises to the perinuclear region. The catalysed reaction is L-seryl-[protein] + ATP = O-phospho-L-seryl-[protein] + ADP + H(+). It catalyses the reaction L-threonyl-[protein] + ATP = O-phospho-L-threonyl-[protein] + ADP + H(+). Specifically inhibited by CDD-2807 ((3-([1,1'-Biphenyl]-2-ylethynyl)-1H-indazol-5-yl)(2,6-diazaspiro[3.5]nonan-2-yl)methanone). CDD-2807 is a potential male contraceptive drug: it is not toxic, efficiently crosses the blood-testis barrier and induces a reversible contraceptive effect in male mice. Serine/threonine protein kinase required for spermatid differentiation and male fertility. Promotes sperm flagella assembly during spermatogenesis by mediating phosphorylation of fibrous sheath proteins AKAP3 and AKAP4. Also phosphorylates vimentin/VIM, thereby regulating the dynamic behavior of the intermediate filament cytoskeleton. The polypeptide is Serine/threonine-protein kinase 33 (Mus musculus (Mouse)).